Here is a 663-residue protein sequence, read N- to C-terminus: Alpha-1,4-glucan:maltose-1-phosphate maltosyltransferase (663 aa).

The tract at residues 238–266 (IGETNRKGPDDAPEAGPDDPGSPWAIGGF) is disordered. Lys-244, Gln-309, and Asp-344 together coordinate alpha-maltose 1-phosphate. Catalysis depends on Asp-380, which acts as the Nucleophile. Residue Asn-381 coordinates alpha-maltose 1-phosphate. Residue Glu-409 is the Proton donor of the active site. 521–522 (KY) is an alpha-maltose 1-phosphate binding site.

Belongs to the glycosyl hydrolase 13 family. GlgE subfamily. In terms of assembly, homodimer.

It catalyses the reaction alpha-maltose 1-phosphate + [(1-&gt;4)-alpha-D-glucosyl](n) = [(1-&gt;4)-alpha-D-glucosyl](n+2) + phosphate. Functionally, maltosyltransferase that uses maltose 1-phosphate (M1P) as the sugar donor to elongate linear or branched alpha-(1-&gt;4)-glucans. Is involved in a branched alpha-glucan biosynthetic pathway from trehalose, together with TreS, Mak and GlgB. The sequence is that of Alpha-1,4-glucan:maltose-1-phosphate maltosyltransferase from Salinibacter ruber (strain DSM 13855 / M31).